Reading from the N-terminus, the 627-residue chain is RNA interference defective protein 10 (627 aa).

Disordered regions lie at residues 1–31 (MSNHRSNFRDYQREGIRANNAGTSGDAVRQN), 467–487 (QRDTDEQYDVHQEGPSNHDQY), and 523–589 (SSVR…SEDY). 3 stretches are compositionally biased toward basic and acidic residues: residues 7–16 (NFRDYQREGI), 467–478 (QRDTDEQYDVHQ), and 526–537 (REPEHPSARSRD).

It belongs to the maelstrom family. In terms of assembly, interacts with rde-11 (via RING-type zinc finger domain). Interacts with ergo-1.

In terms of biological role, in complex with rde-11, required in the endogenous and exogenous siRNA pathway for biogenesis and accumulation of secondary small interfering RNA (siRNA) intermediates, such as 22G-siRNAs derived from ergo-1 targets. This is RNA interference defective protein 10 from Caenorhabditis elegans.